The primary structure comprises 380 residues: Interleukin-13 receptor subunit alpha-2 (380 aa).

A signal peptide spans 1–26 (MAFVCLAIGCLYTFLISTTFGCTSSS). Over 27 to 343 (DTEIKVNPPQ…EDLSKKTLLR (317 aa)) the chain is Extracellular. 3 Fibronectin type-III domains span residues 34–134 (PPQD…SPQG), 139–235 (KVQD…LQNI), and 240–333 (PPVY…CWEG). Cysteine 65 and cysteine 113 are joined by a disulfide. Asparagine 115 carries N-linked (GlcNAc...) asparagine glycosylation. 2 disulfide bridges follow: cysteine 145-cysteine 155 and cysteine 184-cysteine 197. Residues asparagine 215, asparagine 290, and asparagine 299 are each glycosylated (N-linked (GlcNAc...) asparagine). Cysteine 269 and cysteine 316 form a disulfide bridge. The WSXWS motif motif lies at 322 to 326 (WSEWS). A helical membrane pass occupies residues 344–363 (FWLPFGFILILVIFVTGLLL). Over 364 to 380 (RKPNTYPKMIPEFFCDT) the chain is Cytoplasmic.

It belongs to the type I cytokine receptor family. Type 5 subfamily. In terms of assembly, interacts with IL4RA. Interacts with high affinity to interleukin-13 (IL13), but not to interleukin-4 (IL4). Post-translationally, cleaved by MMP8 leading to a soluble form that is also able to interact with IL13.

It is found in the cell membrane. Functionally, cell surface receptor that plays a role in the regulation of IL-13-mediated responses. Functions as a decoy receptor that inhibits IL-13- and IL-4-mediated signal transduction via the JAK-STAT pathway and thereby modulates immune responses and inflammation. Serves as a functional signaling receptor for IL-13 in an alternative pathway involving AP-1 ultimately leading to the production of TGFB1. The polypeptide is Interleukin-13 receptor subunit alpha-2 (IL13RA2) (Homo sapiens (Human)).